The following is a 263-amino-acid chain: Ribosomal RNA large subunit methyltransferase E (263 aa).

S-adenosyl-L-methionine contacts are provided by Gly50, Trp52, Asp68, Asn84, and Asp109. Catalysis depends on Lys149, which acts as the Proton acceptor. The region spanning 196–254 (PLRKGDKFVVDIEKLGSSGDGAVLIEGFVVFVKEVEVGEKVRIKITDVKPNFAFADVAE) is the TRAM domain.

This sequence belongs to the class I-like SAM-binding methyltransferase superfamily. RNA methyltransferase RlmE family.

Its subcellular location is the cytoplasm. The catalysed reaction is uridine(2552) in 23S rRNA + S-adenosyl-L-methionine = 2'-O-methyluridine(2552) in 23S rRNA + S-adenosyl-L-homocysteine + H(+). Functionally, specifically methylates the uridine in position 2552 of 23S rRNA at the 2'-O position of the ribose in the fully assembled 50S ribosomal subunit. The protein is Ribosomal RNA large subunit methyltransferase E of Methanosarcina barkeri (strain Fusaro / DSM 804).